Reading from the N-terminus, the 264-residue chain is Phosphoribosylaminoimidazole-succinocarboxamide synthase 1 (264 aa).

Belongs to the SAICAR synthetase family.

The catalysed reaction is 5-amino-1-(5-phospho-D-ribosyl)imidazole-4-carboxylate + L-aspartate + ATP = (2S)-2-[5-amino-1-(5-phospho-beta-D-ribosyl)imidazole-4-carboxamido]succinate + ADP + phosphate + 2 H(+). Its pathway is purine metabolism; IMP biosynthesis via de novo pathway; 5-amino-1-(5-phospho-D-ribosyl)imidazole-4-carboxamide from 5-amino-1-(5-phospho-D-ribosyl)imidazole-4-carboxylate: step 1/2. The protein is Phosphoribosylaminoimidazole-succinocarboxamide synthase 1 (purC1) of Mesorhizobium japonicum (strain LMG 29417 / CECT 9101 / MAFF 303099) (Mesorhizobium loti (strain MAFF 303099)).